The chain runs to 83 residues: Large ribosomal subunit protein bL31B (83 aa).

Belongs to the bacterial ribosomal protein bL31 family. Type B subfamily. In terms of assembly, part of the 50S ribosomal subunit.

This chain is Large ribosomal subunit protein bL31B, found in Lactobacillus gasseri (strain ATCC 33323 / DSM 20243 / BCRC 14619 / CIP 102991 / JCM 1131 / KCTC 3163 / NCIMB 11718 / NCTC 13722 / AM63).